The chain runs to 182 residues: ATP synthase subunit delta (182 aa).

It belongs to the ATPase delta chain family. F-type ATPases have 2 components, F(1) - the catalytic core - and F(0) - the membrane proton channel. F(1) has five subunits: alpha(3), beta(3), gamma(1), delta(1), epsilon(1). F(0) has three main subunits: a(1), b(2) and c(10-14). The alpha and beta chains form an alternating ring which encloses part of the gamma chain. F(1) is attached to F(0) by a central stalk formed by the gamma and epsilon chains, while a peripheral stalk is formed by the delta and b chains.

The protein resides in the cell membrane. F(1)F(0) ATP synthase produces ATP from ADP in the presence of a proton or sodium gradient. F-type ATPases consist of two structural domains, F(1) containing the extramembraneous catalytic core and F(0) containing the membrane proton channel, linked together by a central stalk and a peripheral stalk. During catalysis, ATP synthesis in the catalytic domain of F(1) is coupled via a rotary mechanism of the central stalk subunits to proton translocation. Functionally, this protein is part of the stalk that links CF(0) to CF(1). It either transmits conformational changes from CF(0) to CF(1) or is implicated in proton conduction. In Desulforudis audaxviator (strain MP104C), this protein is ATP synthase subunit delta.